A 208-amino-acid chain; its full sequence is MSKVLFVKANDRPAEQAVSSKMYETFVSTYKEANPNTEITELDLFALDLPYYGNIAISGGYKRSQGMELTAEEEKAVATVDQYLNQFLEADKVVFAFPLWNFTVPAPLITYISYLSQAGKTFKYTANGPEGLAGGKKVVVLGARGSDYSSEQMAPMEMAVNYVTTVLGFWGITNPETVVIEGHNQYPDRSQQIVEEGLEKVKKVAAKF.

The protein belongs to the azoreductase type 1 family. As to quaternary structure, homodimer. FMN serves as cofactor.

It catalyses the reaction 2 a quinone + NADH + H(+) = 2 a 1,4-benzosemiquinone + NAD(+). The catalysed reaction is N,N-dimethyl-1,4-phenylenediamine + anthranilate + 2 NAD(+) = 2-(4-dimethylaminophenyl)diazenylbenzoate + 2 NADH + 2 H(+). Its function is as follows. Quinone reductase that provides resistance to thiol-specific stress caused by electrophilic quinones. Also exhibits azoreductase activity. Catalyzes the reductive cleavage of the azo bond in aromatic azo compounds to the corresponding amines. The chain is FMN-dependent NADH:quinone oxidoreductase 2 from Bacillus cereus (strain ATCC 10987 / NRS 248).